Here is a 389-residue protein sequence, read N- to C-terminus: Mesotocin receptor (389 aa).

The Extracellular portion of the chain corresponds to 1–50; that stretch reads MEGLCLNLDCSELPNSSWVNSSMENQNHSSNSTRDPLKRNEEVAKVEVTV. N-linked (GlcNAc...) asparagine glycosylation is found at Asn15, Asn20, Asn27, and Asn31. Residues 51-71 traverse the membrane as a helical segment; sequence LALILFLALAGNICVLLGIYI. The Cytoplasmic segment spans residues 72 to 87; that stretch reads NRHKHSRMYFFMKHLS. A helical transmembrane segment spans residues 88–108; it reads IADLVVAIFQVLPQLIWDITF. At 109–119 the chain is on the extracellular side; it reads RFYAPDLVCRL. A disulfide bridge connects residues Cys117 and Cys192. The chain crosses the membrane as a helical span at residues 120-140; sequence VTYLQVVGMFASTYMLLLMSL. Topologically, residues 141–159 are cytoplasmic; it reads DRCLAICQPLRSLHRRSDC. Residues 160–180 form a helical membrane-spanning segment; it reads VYVLFTWILSFLLSTPQTVIF. Topologically, residues 181 to 207 are extracellular; the sequence is SLTEVGNGVYDCRADFIQPWGPKAYIT. Residues 208–228 traverse the membrane as a helical segment; it reads WITLAVYIIPVMILSVCYGLI. At 229–275 the chain is on the cytoplasmic side; it reads SYKIWQNIRLKTVCESNLRLSTSRRATLSRVSSVRLISKAKIRTVKM. The chain crosses the membrane as a helical span at residues 276–296; sequence TFIIVLAYIVCWTPFFFVQMW. At 297–308 the chain is on the extracellular side; the sequence is SVWDPNPPKEAS. Residues 309-329 form a helical membrane-spanning segment; sequence LFIIAMLLGSLNSCCNPWIYM. Over 330–389 the chain is Cytoplasmic; the sequence is LFTGHLFHDLLQSFLCCSARYLKTQQQGSDLSASRKSNSSTFVLSRKSSSQKSITQPSTA. The tract at residues 360 to 389 is disordered; sequence LSASRKSNSSTFVLSRKSSSQKSITQPSTA.

This sequence belongs to the G-protein coupled receptor 1 family. Vasopressin/oxytocin receptor subfamily. As to expression, highly expressed in the bladder. Also expressed in kidney, brain and skeletal muscle.

It is found in the cell membrane. Its function is as follows. Binds to mesotocin and may play a role in the regulation of water and salt transport. The sequence is that of Mesotocin receptor from Rhinella marina (Cane toad).